The sequence spans 143 residues: Large ribosomal subunit protein uL11 (143 aa).

The protein belongs to the universal ribosomal protein uL11 family. Part of the ribosomal stalk of the 50S ribosomal subunit. Interacts with L10 and the large rRNA to form the base of the stalk. L10 forms an elongated spine to which L12 dimers bind in a sequential fashion forming a multimeric L10(L12)X complex. In terms of processing, one or more lysine residues are methylated.

In terms of biological role, forms part of the ribosomal stalk which helps the ribosome interact with GTP-bound translation factors. In Borrelia garinii subsp. bavariensis (strain ATCC BAA-2496 / DSM 23469 / PBi) (Borreliella bavariensis), this protein is Large ribosomal subunit protein uL11.